The following is a 675-amino-acid chain: Alpha-1,4-glucan:maltose-1-phosphate maltosyltransferase (675 aa).

Residues lysine 256, glutamine 316, and aspartate 351 each coordinate alpha-maltose 1-phosphate. Aspartate 386 functions as the Nucleophile in the catalytic mechanism. Asparagine 387 contacts alpha-maltose 1-phosphate. The active-site Proton donor is glutamate 415. An alpha-maltose 1-phosphate-binding site is contributed by 525–526 (KY).

This sequence belongs to the glycosyl hydrolase 13 family. GlgE subfamily. In terms of assembly, homodimer.

The catalysed reaction is alpha-maltose 1-phosphate + [(1-&gt;4)-alpha-D-glucosyl](n) = [(1-&gt;4)-alpha-D-glucosyl](n+2) + phosphate. In terms of biological role, maltosyltransferase that uses maltose 1-phosphate (M1P) as the sugar donor to elongate linear or branched alpha-(1-&gt;4)-glucans. Is involved in a branched alpha-glucan biosynthetic pathway from trehalose, together with TreS, Mak and GlgB. This Corynebacterium glutamicum (strain ATCC 13032 / DSM 20300 / JCM 1318 / BCRC 11384 / CCUG 27702 / LMG 3730 / NBRC 12168 / NCIMB 10025 / NRRL B-2784 / 534) protein is Alpha-1,4-glucan:maltose-1-phosphate maltosyltransferase.